A 311-amino-acid chain; its full sequence is DNA-directed RNA polymerase subunit alpha (311 aa).

Residues 1–227 form an alpha N-terminal domain (alpha-NTD) region; that stretch reads MAQFQIECIE…NLFCSLRNLD (227 aa). The tract at residues 239-311 is alpha C-terminal domain (alpha-CTD); that stretch reads DKKISQVLIE…GISLPKEKSD (73 aa).

This sequence belongs to the RNA polymerase alpha chain family. In terms of assembly, in plastids the minimal PEP RNA polymerase catalytic core is composed of four subunits: alpha, beta, beta', and beta''. When a (nuclear-encoded) sigma factor is associated with the core the holoenzyme is formed, which can initiate transcription.

The protein localises to the plastid. It localises to the chloroplast. The enzyme catalyses RNA(n) + a ribonucleoside 5'-triphosphate = RNA(n+1) + diphosphate. Functionally, DNA-dependent RNA polymerase catalyzes the transcription of DNA into RNA using the four ribonucleoside triphosphates as substrates. The chain is DNA-directed RNA polymerase subunit alpha from Pyropia yezoensis (Susabi-nori).